We begin with the raw amino-acid sequence, 296 residues long: Enoyl-CoA hydratase domain-containing protein 2, mitochondrial (296 aa).

Residues 1 to 17 (MLRVLPRALRLPCSWRF) constitute a mitochondrion transit peptide. An N6-acetyllysine; alternate modification is found at Lys101. Lys101 is subject to N6-succinyllysine; alternate.

Belongs to the enoyl-CoA hydratase/isomerase family.

It is found in the mitochondrion. In Mus musculus (Mouse), this protein is Enoyl-CoA hydratase domain-containing protein 2, mitochondrial (Echdc2).